The sequence spans 605 residues: Arginyl-tRNA--protein transferase 2 (605 aa).

The span at 496–513 (KVSSSSSSPQASETLLES) shows a compositional bias: low complexity. The segment at 496-549 (KVSSSSSSPQASETLLESTSEHEDMEQGDTNDDDDEMYNSDEDSDSDSSSSRNR) is disordered. Over residues 518-541 (EDMEQGDTNDDDDEMYNSDEDSDS) the composition is skewed to acidic residues.

This sequence belongs to the R-transferase family.

It carries out the reaction an N-terminal L-alpha-aminoacyl-[protein] + L-arginyl-tRNA(Arg) = an N-terminal L-arginyl-L-aminoacyl-[protein] + tRNA(Arg) + H(+). Functionally, involved in the post-translational conjugation of arginine to the N-terminal aspartate or glutamate of a protein. This arginylation is required for degradation of the protein via the ubiquitin pathway. Component of the N-end rule pathway with ATE1 and PRT6. The N-end rule pathway regulates seed after-ripening, seedling sugar sensitivity, seedling lipid breakdown, and abscisic acid (ABA) sensitivity of germination. The end-rule pathway regulates various aspects of leaf and shoot development. Involved in the oxygen-dependent N-arginylation of RAP2-12, an activator of hypoxic gene expression. This N-terminal modification leads to ubiquitination by PRT6 and subsequent degradation of RAP2-12 under aerobic conditions. Involved in disease resistance. The end-rule pathway plays a role in regulating the timing and amplitude of the immune response following infection with the bacterial pathogen Pseudomonas syringae pv tomato. Regulates the biosynthesis of plant-defense metabolites such as glucosinolates, and the biosynthesis and response to the phytohormone jasmonate (JA), which plays a key role in plant immunity. The sequence is that of Arginyl-tRNA--protein transferase 2 from Arabidopsis thaliana (Mouse-ear cress).